Reading from the N-terminus, the 325-residue chain is GTP 3',8-cyclase (325 aa).

One can recognise a Radical SAM core domain in the interval 4-219 (TYQREINYLR…DAISAKLGPL (216 aa)). Residue Arg-13 participates in GTP binding. Positions 20 and 24 each coordinate [4Fe-4S] cluster. Tyr-26 is an S-adenosyl-L-methionine binding site. Cys-27 is a [4Fe-4S] cluster binding site. Arg-63 contributes to the GTP binding site. Gly-67 is a binding site for S-adenosyl-L-methionine. Thr-94 contributes to the GTP binding site. Ser-118 is a binding site for S-adenosyl-L-methionine. Lys-155 contacts GTP. Met-189 is a binding site for S-adenosyl-L-methionine. 2 residues coordinate [4Fe-4S] cluster: Cys-254 and Cys-257. 259–261 (RLR) contributes to the GTP binding site. Cys-271 provides a ligand contact to [4Fe-4S] cluster.

Belongs to the radical SAM superfamily. MoaA family. Monomer and homodimer. The cofactor is [4Fe-4S] cluster.

The enzyme catalyses GTP + AH2 + S-adenosyl-L-methionine = (8S)-3',8-cyclo-7,8-dihydroguanosine 5'-triphosphate + 5'-deoxyadenosine + L-methionine + A + H(+). The protein operates within cofactor biosynthesis; molybdopterin biosynthesis. Catalyzes the cyclization of GTP to (8S)-3',8-cyclo-7,8-dihydroguanosine 5'-triphosphate. This Pelotomaculum thermopropionicum (strain DSM 13744 / JCM 10971 / SI) protein is GTP 3',8-cyclase.